A 150-amino-acid polypeptide reads, in one-letter code: Deoxyuridine 5'-triphosphate nucleotidohydrolase (150 aa).

Residues 69–71 (RSG), N82, 86–88 (LID), and K96 each bind substrate.

It belongs to the dUTPase family. The cofactor is Mg(2+).

The enzyme catalyses dUTP + H2O = dUMP + diphosphate + H(+). Its pathway is pyrimidine metabolism; dUMP biosynthesis; dUMP from dCTP (dUTP route): step 2/2. Functionally, this enzyme is involved in nucleotide metabolism: it produces dUMP, the immediate precursor of thymidine nucleotides and it decreases the intracellular concentration of dUTP so that uracil cannot be incorporated into DNA. This Neisseria meningitidis serogroup A / serotype 4A (strain DSM 15465 / Z2491) protein is Deoxyuridine 5'-triphosphate nucleotidohydrolase.